Consider the following 715-residue polypeptide: Phosphatidylinositol 4-phosphate 5-kinase 6 (715 aa).

Basic and acidic residues predominate over residues 1-13 (MSVAHADDADDYS). Residues 1–21 (MSVAHADDADDYSRPTGESYH) are disordered. 8 MORN repeats span residues 32–54 (YTGQ…DGCM), 55–77 (YVGD…SGAT), 78–100 (YEGD…SGDL), 101–123 (YRGS…NGDC), 124–146 (YDGE…NENH), 147–169 (YIGQ…NGNR), 170–192 (YDGS…DGSF), and 193–214 (YVGV…STSS). Positions 253 to 306 (GASEQSSSGNRTKNSERPRRRSVDGRVSNGEMELRSNGSGYLQVDDNAESTRSS) are disordered. Residues 255–264 (SEQSSSGNRT) show a composition bias toward polar residues. A compositionally biased stretch (basic and acidic residues) spans 265–276 (KNSERPRRRSVD). Residues 321 to 711 (TISKGHKNYE…RFRDFIFRVF (391 aa)) enclose the PIPK domain. The tract at residues 671–692 (YDISKKLEHAYKSMQYDPTSIS) is activation loop.

The catalysed reaction is a 1,2-diacyl-sn-glycero-3-phospho-(1D-myo-inositol 4-phosphate) + ATP = a 1,2-diacyl-sn-glycero-3-phospho-(1D-myo-inositol-4,5-bisphosphate) + ADP + H(+). The protein is Phosphatidylinositol 4-phosphate 5-kinase 6 (PIP5K6) of Arabidopsis thaliana (Mouse-ear cress).